The sequence spans 281 residues: Light-independent protochlorophyllide reductase iron-sulfur ATP-binding protein (281 aa).

ATP is bound by residues 10–15 (GIGKST) and Lys-39. Residue Ser-14 coordinates Mg(2+). [4Fe-4S] cluster-binding residues include Cys-95 and Cys-129. 180–181 (NR) provides a ligand contact to ATP.

Belongs to the NifH/BchL/ChlL family. As to quaternary structure, homodimer. Protochlorophyllide reductase is composed of three subunits; ChlL, ChlN and ChlB. It depends on [4Fe-4S] cluster as a cofactor.

The enzyme catalyses chlorophyllide a + oxidized 2[4Fe-4S]-[ferredoxin] + 2 ADP + 2 phosphate = protochlorophyllide a + reduced 2[4Fe-4S]-[ferredoxin] + 2 ATP + 2 H2O. It functions in the pathway porphyrin-containing compound metabolism; chlorophyll biosynthesis (light-independent). Functionally, component of the dark-operative protochlorophyllide reductase (DPOR) that uses Mg-ATP and reduced ferredoxin to reduce ring D of protochlorophyllide (Pchlide) to form chlorophyllide a (Chlide). This reaction is light-independent. The L component serves as a unique electron donor to the NB-component of the complex, and binds Mg-ATP. The polypeptide is Light-independent protochlorophyllide reductase iron-sulfur ATP-binding protein (Thermosynechococcus vestitus (strain NIES-2133 / IAM M-273 / BP-1)).